Consider the following 30-residue polypeptide: Ornithine carbamoyltransferase (30 aa).

It belongs to the aspartate/ornithine carbamoyltransferase superfamily. OTCase family.

It is found in the cytoplasm. It catalyses the reaction carbamoyl phosphate + L-ornithine = L-citrulline + phosphate + H(+). Its pathway is amino-acid biosynthesis; L-arginine biosynthesis; L-arginine from L-ornithine and carbamoyl phosphate: step 1/3. Its function is as follows. Has vitronectin and fibronectin-binding activity. This is Ornithine carbamoyltransferase (argF) from Staphylococcus epidermidis.